A 143-amino-acid chain; its full sequence is MAKKIVGYIKLQVPAGKANPSPPIGPALGQRGLNIMEFCKAFNAATQKMEVGLPVPVVITAYADKSFTFTMKTTPATVLIKKAAGVGKGSAKPHTDKIGRLTRKQMEEIAQIKMPDLTAADMDAAVRTIAGSARSMGIEVEGA.

This sequence belongs to the universal ribosomal protein uL11 family. As to quaternary structure, part of the ribosomal stalk of the 50S ribosomal subunit. Interacts with L10 and the large rRNA to form the base of the stalk. L10 forms an elongated spine to which L12 dimers bind in a sequential fashion forming a multimeric L10(L12)X complex. Post-translationally, one or more lysine residues are methylated.

Forms part of the ribosomal stalk which helps the ribosome interact with GTP-bound translation factors. The chain is Large ribosomal subunit protein uL11 from Nitrosospira multiformis (strain ATCC 25196 / NCIMB 11849 / C 71).